We begin with the raw amino-acid sequence, 277 residues long: Large ribosomal subunit protein uL2 (277 aa).

The segment at methionine 225–glycine 277 is disordered.

It belongs to the universal ribosomal protein uL2 family. Part of the 50S ribosomal subunit. Forms a bridge to the 30S subunit in the 70S ribosome.

In terms of biological role, one of the primary rRNA binding proteins. Required for association of the 30S and 50S subunits to form the 70S ribosome, for tRNA binding and peptide bond formation. It has been suggested to have peptidyltransferase activity; this is somewhat controversial. Makes several contacts with the 16S rRNA in the 70S ribosome. In Nitrosospira multiformis (strain ATCC 25196 / NCIMB 11849 / C 71), this protein is Large ribosomal subunit protein uL2.